Reading from the N-terminus, the 473-residue chain is Ras-GEF domain-containing family member 1B (473 aa).

Positions H34 to I161 constitute an N-terminal Ras-GEF domain. A Ras-GEF domain is found at D205–P453.

As to quaternary structure, interacts with CCDC124 during cytokinesis. Interacts with Ras family proteins. In terms of tissue distribution, constitutively expressed in brain, intestine and testis. Low constitutive expression, if any, in heart, lung, lymph nodes and thymus. Up-regulated in heart, kidney, liver, lymph nodes, spleen and thymus at day 20 after infection with Trypanosoma cruzi. Not detected in muscle.

It is found in the early endosome. Its subcellular location is the late endosome. The protein localises to the midbody. In terms of biological role, guanine nucleotide exchange factor (GEF) with specificity for RAP2A, it doesn't seems to activate other Ras family proteins (in vitro). The chain is Ras-GEF domain-containing family member 1B (Rasgef1b) from Mus musculus (Mouse).